Consider the following 231-residue polypeptide: Triggering receptor expressed on myeloid cells 1 (231 aa).

An N-terminal signal peptide occupies residues 1–20; sequence MRKTRLWGLLWMFFVSELLA. Residues 21 to 202 are Extracellular-facing; sequence ATKLTEEKYE…TDIIRVPVFN (182 aa). The region spanning 26 to 131 is the Ig-like V-type domain; sequence EEKYELKEGQ…LFDRIRLVVT (106 aa). A disulfide bridge links C41 with C110. 2 stretches are compositionally biased toward polar residues: residues 134–157 and 164–182; these read SSGT…TTTK and TSPT…DVST. The interval 134 to 182 is disordered; that stretch reads SSGTPGSSENSTPNVYKTPPTTTKALRPLYTSPTTVTQAPPKSTADVST. N-linked (GlcNAc...) asparagine glycosylation is found at N188 and N191. A helical membrane pass occupies residues 203-223; sequence IAILVAGGFLSKSLVFSVLFA. The Cytoplasmic segment spans residues 224–231; the sequence is VTLRSFVP.

In terms of assembly, monomer. Homomultimer; when activated. Interacts with TYROBP/DAP12. Interacts with TLR4.

The protein localises to the cell membrane. Its function is as follows. Cell surface receptor that plays important roles in innate and adaptive immunity by amplifying inflammatory responses. Upon activation by various ligands such as PGLYRP1, HMGB1 or HSP70, multimerizes and forms a complex with transmembrane adapter TYROBP/DAP12. In turn, initiates a SYK-mediated cascade of tyrosine phosphorylation, activating multiple downstream mediators such as BTK, MAPK1, MAPK3 or phospholipase C-gamma. This cascade promotes the neutrophil- and macrophage-mediated release of pro-inflammatory cytokines and/or chemokines, as well as their migration and thereby amplifies inflammatory responses that are triggered by bacterial and fungal infections. By also promoting the amplification of inflammatory signals that are initially triggered by Toll-like receptor (TLR) and NOD-like receptor engagement, plays a major role in the pathophysiology of acute and chronic inflammatory diseases of different etiologies including septic shock and atherosclerosis. The chain is Triggering receptor expressed on myeloid cells 1 (TREM1) from Pongo abelii (Sumatran orangutan).